The chain runs to 51 residues: Epididymal sperm protein E (51 aa).

Residues 8–39 (CVRCRRKTPSFNSKTVTFRNKRRAIRSHCAYC) fold into a zinc finger.

As to expression, sperm.

It is found in the nucleus. The sequence is that of Epididymal sperm protein E from Sepia officinalis (Common cuttlefish).